The primary structure comprises 339 residues: Small ribosomal subunit biogenesis GTPase RsgA (339 aa).

The CP-type G domain maps to 111-271 (MRGLLKPVAA…LIDSPGIREF (161 aa)). GTP is bound by residues 159–162 (NKAD) and 213–221 (GQSGVGKSS). The Zn(2+) site is built by C295, C300, H302, and C308.

It belongs to the TRAFAC class YlqF/YawG GTPase family. RsgA subfamily. As to quaternary structure, monomer. Associates with 30S ribosomal subunit, binds 16S rRNA. The cofactor is Zn(2+).

It is found in the cytoplasm. One of several proteins that assist in the late maturation steps of the functional core of the 30S ribosomal subunit. Helps release RbfA from mature subunits. May play a role in the assembly of ribosomal proteins into the subunit. Circularly permuted GTPase that catalyzes slow GTP hydrolysis, GTPase activity is stimulated by the 30S ribosomal subunit. The polypeptide is Small ribosomal subunit biogenesis GTPase RsgA (Pseudomonas aeruginosa (strain UCBPP-PA14)).